We begin with the raw amino-acid sequence, 306 residues long: Extensin (306 aa).

An N-terminal signal peptide occupies residues methionine 1 to alanine 32. The disordered stretch occupies residues lysine 33–tyrosine 306. Pro residues-rich tracts occupy residues serine 38–serine 122, serine 133–serine 152, serine 183–serine 214, and serine 225–proline 290.

Hydroxylated on proline residues in the S-P-P-P-P repeat. In terms of processing, O-glycosylated on hydroxyprolines.

It is found in the secreted. The protein resides in the primary cell wall. Its function is as follows. Structural component in primary cell wall. The chain is Extensin from Daucus carota (Wild carrot).